The chain runs to 617 residues: 1-deoxy-D-xylulose-5-phosphate synthase (617 aa).

Residues H77 and 118–120 (GHS) contribute to the thiamine diphosphate site. A Mg(2+)-binding site is contributed by D149. Residues 150–151 (GA), N178, Y286, and E367 each bind thiamine diphosphate. Residue N178 participates in Mg(2+) binding.

It belongs to the transketolase family. DXPS subfamily. Homodimer. It depends on Mg(2+) as a cofactor. Thiamine diphosphate is required as a cofactor.

The enzyme catalyses D-glyceraldehyde 3-phosphate + pyruvate + H(+) = 1-deoxy-D-xylulose 5-phosphate + CO2. It participates in metabolic intermediate biosynthesis; 1-deoxy-D-xylulose 5-phosphate biosynthesis; 1-deoxy-D-xylulose 5-phosphate from D-glyceraldehyde 3-phosphate and pyruvate: step 1/1. Its function is as follows. Catalyzes the acyloin condensation reaction between C atoms 2 and 3 of pyruvate and glyceraldehyde 3-phosphate to yield 1-deoxy-D-xylulose-5-phosphate (DXP). In Actinobacillus pleuropneumoniae serotype 5b (strain L20), this protein is 1-deoxy-D-xylulose-5-phosphate synthase.